Here is a 270-residue protein sequence, read N- to C-terminus: Putative pyruvate, phosphate dikinase regulatory protein (270 aa).

151 to 158 (GVSRTSKT) lines the ADP pocket.

The protein belongs to the pyruvate, phosphate/water dikinase regulatory protein family. PDRP subfamily.

The catalysed reaction is N(tele)-phospho-L-histidyl/L-threonyl-[pyruvate, phosphate dikinase] + ADP = N(tele)-phospho-L-histidyl/O-phospho-L-threonyl-[pyruvate, phosphate dikinase] + AMP + H(+). It catalyses the reaction N(tele)-phospho-L-histidyl/O-phospho-L-threonyl-[pyruvate, phosphate dikinase] + phosphate + H(+) = N(tele)-phospho-L-histidyl/L-threonyl-[pyruvate, phosphate dikinase] + diphosphate. Bifunctional serine/threonine kinase and phosphorylase involved in the regulation of the pyruvate, phosphate dikinase (PPDK) by catalyzing its phosphorylation/dephosphorylation. The protein is Putative pyruvate, phosphate dikinase regulatory protein of Lysinibacillus sphaericus (strain C3-41).